Consider the following 695-residue polypeptide: Elongation factor G (695 aa).

Residues 8–282 (KDTRNIGIMA…AIVDYMPAPI (275 aa)) form the tr-type G domain. GTP contacts are provided by residues 17–24 (AHIDAGKT), 81–85 (DTPGH), and 135–138 (NKMD). A disordered region spans residues 285–304 (PDIKGVDPQTDEPTTRKSSD).

It belongs to the TRAFAC class translation factor GTPase superfamily. Classic translation factor GTPase family. EF-G/EF-2 subfamily.

The protein localises to the cytoplasm. Its function is as follows. Catalyzes the GTP-dependent ribosomal translocation step during translation elongation. During this step, the ribosome changes from the pre-translocational (PRE) to the post-translocational (POST) state as the newly formed A-site-bound peptidyl-tRNA and P-site-bound deacylated tRNA move to the P and E sites, respectively. Catalyzes the coordinated movement of the two tRNA molecules, the mRNA and conformational changes in the ribosome. This chain is Elongation factor G, found in Finegoldia magna (strain ATCC 29328 / DSM 20472 / WAL 2508) (Peptostreptococcus magnus).